A 257-amino-acid polypeptide reads, in one-letter code: Putative hydro-lyase YcsI (257 aa).

The protein belongs to the D-glutamate cyclase family.

The protein is Putative hydro-lyase YcsI (ycsI) of Bacillus subtilis (strain 168).